A 353-amino-acid polypeptide reads, in one-letter code: Methylthioribose-1-phosphate isomerase (353 aa).

Substrate-binding positions include R51–A53, R94, and Q199. The active-site Proton donor is D240. Position 250–251 (N250–K251) interacts with substrate.

Belongs to the eIF-2B alpha/beta/delta subunits family. MtnA subfamily. Homodimer.

The catalysed reaction is 5-(methylsulfanyl)-alpha-D-ribose 1-phosphate = 5-(methylsulfanyl)-D-ribulose 1-phosphate. It functions in the pathway amino-acid biosynthesis; L-methionine biosynthesis via salvage pathway; L-methionine from S-methyl-5-thio-alpha-D-ribose 1-phosphate: step 1/6. In terms of biological role, catalyzes the interconversion of methylthioribose-1-phosphate (MTR-1-P) into methylthioribulose-1-phosphate (MTRu-1-P). In Bacillus velezensis (strain DSM 23117 / BGSC 10A6 / LMG 26770 / FZB42) (Bacillus amyloliquefaciens subsp. plantarum), this protein is Methylthioribose-1-phosphate isomerase.